The chain runs to 528 residues: UDP-glucuronosyltransferase 2B30 (528 aa).

A signal peptide spans 1-23 (MSMKWTSALLLIQLSCYLSSGNC). The residue at position 135 (Lys-135) is an N6-succinyllysine. Asn-315 carries an N-linked (GlcNAc...) asparagine glycan. Residues 493–513 (VIGFLLACVATVIFIITKCLF) form a helical membrane-spanning segment.

The protein belongs to the UDP-glycosyltransferase family. Expressed in several tissues, including prostate, testis, mammary gland, kidney, adrenals and intestine.

Its subcellular location is the microsome membrane. It is found in the endoplasmic reticulum membrane. The catalysed reaction is glucuronate acceptor + UDP-alpha-D-glucuronate = acceptor beta-D-glucuronoside + UDP + H(+). Functionally, UDPGTs are of major importance in the conjugation and subsequent elimination of potentially toxic xenobiotics and endogenous compounds. This isozyme has glucuronidating capacity on testosterone, dihydrotestosterone, 5-alpha-androstane-3-alpha,17-beta-diol, androsterone, oestradiol, tetrahydroaldosterone and tetrahydrocortisone. This enzyme is essential to inactivation of several steroids. The sequence is that of UDP-glucuronosyltransferase 2B30 (UGT2B30) from Macaca fascicularis (Crab-eating macaque).